Reading from the N-terminus, the 217-residue chain is GTPase IMAP family member GIMD1 (217 aa).

Residues 6–217 (KMIINLALFG…ENCYQVLTFK (212 aa)) enclose the AIG1-type G domain. GTP contacts are provided by residues 15 to 23 (GMTQSGKSS), S36, and 148 to 150 (HAE).

This sequence belongs to the TRAFAC class TrmE-Era-EngA-EngB-Septin-like GTPase superfamily. AIG1/Toc34/Toc159-like paraseptin GTPase family. IAN subfamily.

In Homo sapiens (Human), this protein is GTPase IMAP family member GIMD1 (GIMD1).